The following is a 565-amino-acid chain: NAD-dependent malic enzyme (565 aa).

Tyr-104 serves as the catalytic Proton donor. NAD(+) is bound at residue Arg-157. Catalysis depends on Lys-175, which acts as the Proton acceptor. Residues Glu-246, Asp-247, and Asp-270 each coordinate a divalent metal cation. 2 residues coordinate NAD(+): Asp-270 and Asn-418.

It belongs to the malic enzymes family. In terms of assembly, homotetramer. The cofactor is Mg(2+). Mn(2+) is required as a cofactor.

It catalyses the reaction (S)-malate + NAD(+) = pyruvate + CO2 + NADH. The enzyme catalyses oxaloacetate + H(+) = pyruvate + CO2. The chain is NAD-dependent malic enzyme from Photorhabdus laumondii subsp. laumondii (strain DSM 15139 / CIP 105565 / TT01) (Photorhabdus luminescens subsp. laumondii).